Reading from the N-terminus, the 689-residue chain is Ribonuclease J (689 aa).

Residues 1 to 88 (MTDNNQNNEN…RNYAQEELDS (88 aa)) form a disordered region. Residues 9 to 24 (ENHENSSENSKADEMR) are compositionally biased toward basic and acidic residues. A compositionally biased stretch (basic residues) spans 56–78 (HHKKEHRPNKKPNNHHKQKHAKT). N6-acetyllysine occurs at positions 132 and 138. Histidine 206, histidine 208, aspartate 210, histidine 211, histidine 275, and aspartate 297 together coordinate Zn(2+). Residues lysine 321, lysine 335, and lysine 395 each carry the N6-acetyllysine modification. 498-502 (HVSGH) serves as a coordination point for substrate. An N6-acetyllysine modification is found at lysine 509. Residue histidine 524 coordinates Zn(2+). Lysine 545, lysine 632, and lysine 647 each carry N6-acetyllysine.

The protein belongs to the metallo-beta-lactamase superfamily. RNA-metabolizing metallo-beta-lactamase-like family. Bacterial RNase J subfamily. In terms of assembly, homodimer. Homotetramer; dimer of homodimers. Interacts with RNA helicase RhpA, might be a member of a minimal RNA degradosome complex. The cofactor is Zn(2+). In terms of processing, acetylated on nine lysine residues. Some of the residues are acetylated by multiple different mechanisms. RimL is partially responsible for the acetylation of Lys-321, Lys-395 and Lys-647. HPB8_1270 homolog is partially responsible for the acetylation of Lys-321, Lys-395, Lys-509 and Lys-647. Acetyl-phosphate-mediated non-enzymatic acetylation pathway takes part in the acetylation of Lys-132, Lys-321, Lys-395, Lys-509 and Lys-647. Acetylation of the remaining residues Lys-138, Lys-335, Lys-545 and Lys-632 occurs by a yet undetermined mechanism. Acetylation on a number of these residues is important for growth regulation and proper cell morphology.

It localises to the cytoplasm. Its activity is regulated as follows. Catalytic activity is regulated by the balance between homodimers and homotetramers, with homotetramers being the active forms of this enzyme. Acetylation allosterically regulates the homooligomerization state and hence the catalytic activity. Functionally, an RNase that has 5'-3' exoribonuclease and endoribonuclease activity. Degrades 5'-monophosphorylated ssRNA and dsRNA, considerably more active on ssRNA. Association with RhpA significantly increases the dsRNase activity. Degrades RNA substrate with hairpin structures at both ends with low activity, but presence of RhpA significantly increases the activity on this substrate. Stimulates ATPase activity of RNA helicase RhpA. Involved in stabilization of mRNA but apparently not rRNA. The polypeptide is Ribonuclease J (Helicobacter pylori (strain ATCC 700392 / 26695) (Campylobacter pylori)).